Consider the following 430-residue polypeptide: CinA-like protein (430 aa).

It belongs to the CinA family.

This chain is CinA-like protein, found in Prochlorococcus marinus (strain NATL1A).